A 271-amino-acid chain; its full sequence is Formamidopyrimidine-DNA glycosylase (271 aa).

The active-site Schiff-base intermediate with DNA is P2. E3 serves as the catalytic Proton donor. Catalysis depends on K58, which acts as the Proton donor; for beta-elimination activity. Positions 91, 110, and 152 each coordinate DNA. The FPG-type zinc-finger motif lies at 237–271 (QIYGRSAHPCPICGTPIRLERIGQRASYYCTQCQH). Residue R261 is the Proton donor; for delta-elimination activity of the active site.

It belongs to the FPG family. In terms of assembly, monomer. Zn(2+) is required as a cofactor.

The catalysed reaction is Hydrolysis of DNA containing ring-opened 7-methylguanine residues, releasing 2,6-diamino-4-hydroxy-5-(N-methyl)formamidopyrimidine.. The enzyme catalyses 2'-deoxyribonucleotide-(2'-deoxyribose 5'-phosphate)-2'-deoxyribonucleotide-DNA = a 3'-end 2'-deoxyribonucleotide-(2,3-dehydro-2,3-deoxyribose 5'-phosphate)-DNA + a 5'-end 5'-phospho-2'-deoxyribonucleoside-DNA + H(+). Its function is as follows. Involved in base excision repair of DNA damaged by oxidation or by mutagenic agents. Acts as a DNA glycosylase that recognizes and removes damaged bases. Has a preference for oxidized purines, such as 7,8-dihydro-8-oxoguanine (8-oxoG). Has AP (apurinic/apyrimidinic) lyase activity and introduces nicks in the DNA strand. Cleaves the DNA backbone by beta-delta elimination to generate a single-strand break at the site of the removed base with both 3'- and 5'-phosphates. The chain is Formamidopyrimidine-DNA glycosylase from Nitrosococcus oceani (strain ATCC 19707 / BCRC 17464 / JCM 30415 / NCIMB 11848 / C-107).